Consider the following 1379-residue polypeptide: MAERINLVFHNKVLDGTAMKRLISRLIDHFGMAYTSHILDQVKTLGFQQATATSISLGIDDLLTIPSKGWLVQDAEQQSFVFEKYQHSGNVHAVEKLRQSIEIWYATSEYLRQEMHLNFRMTDPLNPVHIMSFSGARGNASQVHQLVGMRGLMSDPQGQMIDLPIQSNLREGLSLTEYIISCYGARKGVVDTAVRTSDAGYLTRRLVEVVQHIVVRRADCGTARGISVSPHNGMMPERIFIQTLIGRVLADDIYIGPRCIATRNQNIGVGLVNKLLNFRAQPISIRTPFTCRSTSWICRLCYGRSPTHGDLVELGEAVGIIAGQSIGEPGTQLTLRTFHTGGVFTGGTAEHVRAPSNGKIRFTEDLVHPTRTRHGYPAFFCSIYLYVTIQSQDILHHVKIPPKSFILVQNDQYVESEQVIAETRAGASTLNYKEKIRKHIYSDSGGEMHWSTNVYHAPEFTYGNVHLLSKTSHLWILLGEPCHSSLVSTSIHRDQDQMSAQSLSVKRRYTSKLSETNDEAKQKIASEDLIADYSDVNPSRCTDHYNLVYPAILPILDENSYFFSNCLSKRRRNQFIIPLQSIQEHKNQLMPCSSISMKIPPNANGIFCANSILAYFDDPRYRRNNSGSTKYGTLEMYSTIKKEDFIQYRGVNEFRLKSKVERFFFIPEEVHILPGSSSIMVRNQSLIGVDTQITLNLRSRVGGLVWVERKKNRIELKIFFGDIYFPGGADNLSRHSGVLIPPGTEIKTNYKESKKVKNWIYVQRITLSKKKFFFLVRPLVTYEIMDGIPLATLFPPDLLQQRENAQLRVVNYILHGNGKPIRGNYDASIQLVRTCLVFKRNQDKKSSYSEAARASVVEIRTNYLIRHFLRIDFVKAPISYIGKRYDPLGLGLLAEDWTHKNPYSKARIHQNLNQNKGTIHTFFNRNKGSQSLIILSSSNCSRMDPANGAKSNNVIQESKKEEYPMLQISNSLGPLGTYPPIANCDSFNRLLTHNQILVTNYFHLDNVKPPFQVFKFKYYFIAENLKICNYNPCSNLRLNAFYLNLNFLHPNSCAETSKIMSLGQFICQNVCIDKTRPPFKSGQVIFIQVDSVVIRLAKPYLATPGATVHGLYGETFFGGDTVVTFNYEKSRSGDITQGLPKVEQVLEVRSVDSISMNLEGRVEGWGKCITGILGIPWGFLIGAELTIVQSRISLVNKIQKVYRFQGVHIHNRHIEIIVRQITSKVLVSEDGMSNVFLPGELIGLLRAERMGRALEEPIHYRSVFLGITKASLNTQSFISEASFQETARVLSKAALGGRIDWLKGLKENVVLGGVIPAGTGFRGLVDPSKQYNKNNIPLKNNLFEGGMTDLLVHHRKLFDSFLNTLIYHHHRIDRFYNDS.

Positions 220, 291, 298, and 301 each coordinate Zn(2+).

It belongs to the RNA polymerase beta' chain family. RpoC2 subfamily. In plastids the minimal PEP RNA polymerase catalytic core is composed of four subunits: alpha, beta, beta', and beta''. When a (nuclear-encoded) sigma factor is associated with the core the holoenzyme is formed, which can initiate transcription. Zn(2+) is required as a cofactor.

It localises to the plastid. The catalysed reaction is RNA(n) + a ribonucleoside 5'-triphosphate = RNA(n+1) + diphosphate. Functionally, DNA-dependent RNA polymerase catalyzes the transcription of DNA into RNA using the four ribonucleoside triphosphates as substrates. This Cuscuta reflexa (Southern Asian dodder) protein is DNA-directed RNA polymerase subunit beta''.